The sequence spans 99 residues: Gibberellin-regulated protein 3 (99 aa).

The first 26 residues, 1–26 (MAIFRSTLVLLLILFCLTTFELHVHA), serve as a signal peptide directing secretion.

Belongs to the GASA family. In terms of processing, six disulfide bonds may be present. As to expression, expressed in siliques, dry seeds and vasculature of roots and rosette leaves.

The protein resides in the secreted. Its function is as follows. Gibberellin-regulated protein that may function in hormonal controlled steps of development such as seed germination, flowering and seed maturation. This is Gibberellin-regulated protein 3 (GASA3) from Arabidopsis thaliana (Mouse-ear cress).